The following is a 275-amino-acid chain: MAVASTFIPGLNPQNPHYIPGYTGHCPLLRFSVGQTYGQVTGQLLRGPPGLAWPPVHRTLLPPIRPPRSPEVPRESLPVRRGQERLSSSMIPGYTGFVPRAQFIFAKNCSQVWAEALSDFTHLHEKQGSEELPKEAKGRKDTEKDQVPEPEGQLEEPTLEVVEQASPYSMDDRDPRKFFMSGFTGYVPCARFLFGSSFPVLTNQALQEFGQKHSPGSAQDPKHLPPLPRTYPQNLGLLPNYGGYVPGYKFQFGHTFGHLTHDALGLSTFQKQLLA.

Disordered stretches follow at residues 62–84 (PPIR…RGQE) and 125–169 (EKQG…SPYS). Composition is skewed to basic and acidic residues over residues 71–84 (EVPR…RGQE) and 125–147 (EKQG…KDQV).

This sequence belongs to the CIMIP2 family. Microtubule inner protein component of sperm flagellar doublet microtubules. In terms of tissue distribution, expressed in airway epithelial cells.

Its subcellular location is the cytoplasm. It is found in the cytoskeleton. It localises to the cilium axoneme. The protein resides in the flagellum axoneme. Functionally, microtubule inner protein (MIP) part of the dynein-decorated doublet microtubules (DMTs) in cilia axoneme, which is required for motile cilia beating. This chain is Ciliary microtubule inner protein 2B, found in Homo sapiens (Human).